A 98-amino-acid polypeptide reads, in one-letter code: Large ribosomal subunit protein uL23 (98 aa).

It belongs to the universal ribosomal protein uL23 family. Part of the 50S ribosomal subunit. Contacts protein L29, and trigger factor when it is bound to the ribosome.

Its function is as follows. One of the early assembly proteins it binds 23S rRNA. One of the proteins that surrounds the polypeptide exit tunnel on the outside of the ribosome. Forms the main docking site for trigger factor binding to the ribosome. The sequence is that of Large ribosomal subunit protein uL23 from Saccharophagus degradans (strain 2-40 / ATCC 43961 / DSM 17024).